The sequence spans 406 residues: 26S proteasome regulatory subunit 8 (406 aa).

Ala-2 is modified (N-acetylalanine). Ser-120 is subject to Phosphoserine. The tract at residues 186-406 (VLLYGPPGTG…KNMSIKKLWK (221 aa)) is may mediate interaction with PRPF9. Position 190 to 197 (190 to 197 (GPPGTGKT)) interacts with ATP. At Lys-222 the chain carries N6-acetyllysine.

It belongs to the AAA ATPase family. As to quaternary structure, component of the 19S proteasome regulatory particle complex. The 26S proteasome consists of a 20S core particle (CP) and two 19S regulatory subunits (RP). The regulatory particle is made of a lid composed of 9 subunits, a base containing 6 ATPases including PSMC5 and few additional components. Component of a complex with USP49 and RUVBL1. Interacts with PRPF19. Interacts with TRIM5. Interacts with NDC80. Interacts with PAAF1. Interacts, in vitro, with the thyroid hormone receptor (in a thyroid hormone T3-dependent manner) and with retinoid X receptor (RXR). Interacts with ERCC6.

The protein localises to the cytoplasm. The protein resides in the nucleus. Component of the 26S proteasome, a multiprotein complex involved in the ATP-dependent degradation of ubiquitinated proteins. This complex plays a key role in the maintenance of protein homeostasis by removing misfolded or damaged proteins, which could impair cellular functions, and by removing proteins whose functions are no longer required. Therefore, the proteasome participates in numerous cellular processes, including cell cycle progression, apoptosis, or DNA damage repair. PSMC5 belongs to the heterohexameric ring of AAA (ATPases associated with diverse cellular activities) proteins that unfolds ubiquitinated target proteins that are concurrently translocated into a proteolytic chamber and degraded into peptides. In Bos taurus (Bovine), this protein is 26S proteasome regulatory subunit 8 (PSMC5).